We begin with the raw amino-acid sequence, 54 residues long: Small polypeptide DEVIL 12 (54 aa).

The segment at 20-51 (NNKLTPNRSLKETRSRLYIIRRCLVMLLCWRE) is required for DVL/RTFL small polypeptide activity. A glycan (N-linked (GlcNAc...) asparagine) is linked at asparagine 26. A helical transmembrane segment spans residues 31–48 (ETRSRLYIIRRCLVMLLC).

It belongs to the DVL/RTFL small polypeptides family.

It is found in the cell membrane. Small polypeptide acting as a regulatory molecule which coordinates cellular responses required for differentiation, growth and development, probably by restricting polar cell proliferation in lateral organs and coordinating socket cell recruitment and differentiation at trichome sites. This is Small polypeptide DEVIL 12 from Arabidopsis thaliana (Mouse-ear cress).